The sequence spans 225 residues: Lipoprotein-releasing system ATP-binding protein LolD (225 aa).

The ABC transporter domain occupies 5–225; that stretch reads LEVMDLTKGY…RLVDGRVVAD (221 aa). 41 to 48 lines the ATP pocket; it reads GASGTGKS.

Belongs to the ABC transporter superfamily. Lipoprotein translocase (TC 3.A.1.125) family. The complex is composed of two ATP-binding proteins (LolD) and two transmembrane proteins (LolC and LolE).

It localises to the cell inner membrane. Part of the ABC transporter complex LolCDE involved in the translocation of mature outer membrane-directed lipoproteins, from the inner membrane to the periplasmic chaperone, LolA. Responsible for the formation of the LolA-lipoprotein complex in an ATP-dependent manner. The polypeptide is Lipoprotein-releasing system ATP-binding protein LolD (Geobacter metallireducens (strain ATCC 53774 / DSM 7210 / GS-15)).